The following is a 349-amino-acid chain: tRNA-specific 2-thiouridylase MnmA (349 aa).

Residues 7–14 (GLSGGVDS) and Leu-33 each bind ATP. Cys-94 acts as the Nucleophile in catalysis. Cys-94 and Cys-193 form a disulfide bridge. Residue Gly-119 participates in ATP binding. An interaction with tRNA region spans residues 143–145 (KDQ). Cys-193 functions as the Cysteine persulfide intermediate in the catalytic mechanism. The segment at 298–299 (RY) is interaction with tRNA.

It belongs to the MnmA/TRMU family.

It is found in the cytoplasm. It carries out the reaction S-sulfanyl-L-cysteinyl-[protein] + uridine(34) in tRNA + AH2 + ATP = 2-thiouridine(34) in tRNA + L-cysteinyl-[protein] + A + AMP + diphosphate + H(+). In terms of biological role, catalyzes the 2-thiolation of uridine at the wobble position (U34) of tRNA, leading to the formation of s(2)U34. The protein is tRNA-specific 2-thiouridylase MnmA of Gloeothece citriformis (strain PCC 7424) (Cyanothece sp. (strain PCC 7424)).